The following is an 800-amino-acid chain: Phosphate transporter PHO1 homolog 9 (800 aa).

An SPX domain is found at 1–346 (MKFGREFETQ…SRNASKPYLN (346 aa)). At 1–398 (MKFGREFETQ…KTKREKHRIT (398 aa)) the chain is on the cytoplasmic side. Disordered stretches follow at residues 38–77 (QKQQRPPPPPPPPSTGDTVPLKTDGGEGGGGGGGGGPGLS), 91–119 (NRASRSPKKSHKHHNPLSSKRHHHHHNHH), and 212–234 (PDLNSVASAPSSPHSTMRTPAPS). Pro residues predominate over residues 42–51 (RPPPPPPPPS). A compositionally biased stretch (gly residues) spans 63–75 (GEGGGGGGGGGPG). Basic residues predominate over residues 95–119 (RSPKKSHKHHNPLSSKRHHHHHNHH). Residues 216–229 (SVASAPSSPHSTMR) are compositionally biased toward polar residues. A helical membrane pass occupies residues 399–419 (YFLGFFSGCAVALAIAITVLV). The Extracellular segment spans residues 420–439 (HIRGLTKSEGRHQYMENIFP). Residues 440-460 (LYSLFGFVAVHLFMYAADIYF) traverse the membrane as a helical segment. Over 461–483 (WSRYRVNYPFIFGFEQGNDLGYR) the chain is Cytoplasmic. Residues 484 to 504 (EVLLVGSGLAVLTFGGVISNL) form a helical membrane-spanning segment. Over 505–520 (DMEMDPRTKSFSVITE) the chain is Extracellular. A helical transmembrane segment spans residues 521 to 541 (LVPLALLVCLMMVLFCPFNII). Residues 542 to 670 (YRSSRYFFVG…IFEMKRGTYW (129 aa)) lie on the Cytoplasmic side of the membrane. The EXS domain occupies 606-800 (YDSEIYKELY…FQELGGSKSV (195 aa)). A helical transmembrane segment spans residues 671 to 691 (LTVAVTTSSIATLFNTYWDIF). The Extracellular segment spans residues 692 to 718 (RDWGLMNRNSKNPWLRDKLLVPYKSIY). The chain crosses the membrane as a helical span at residues 719 to 739 (FIVMVANVVLRLAWMQTVLGI). Topologically, residues 740-800 (KEAPFLHKRA…FQELGGSKSV (61 aa)) are cytoplasmic.

This sequence belongs to the SYG1 (TC 2.A.94) family. As to expression, specifically expressed in pollen grains.

It localises to the cell membrane. May transport inorganic phosphate (Pi). The sequence is that of Phosphate transporter PHO1 homolog 9 (PHO1-H9) from Arabidopsis thaliana (Mouse-ear cress).